Here is a 399-residue protein sequence, read N- to C-terminus: Probable 2-isopropylmalate synthase (399 aa).

The region spanning 20–272 (VRIFDTTLRD…RTGVNTKLLY (253 aa)) is the Pyruvate carboxyltransferase domain. A divalent metal cation-binding residues include aspartate 29, histidine 210, histidine 212, and asparagine 246.

Belongs to the alpha-IPM synthase/homocitrate synthase family. Homodimer. The cofactor is a divalent metal cation.

The enzyme catalyses 3-methyl-2-oxobutanoate + acetyl-CoA + H2O = (2S)-2-isopropylmalate + CoA + H(+). It functions in the pathway amino-acid biosynthesis; L-leucine biosynthesis; L-leucine from 3-methyl-2-oxobutanoate: step 1/4. Functionally, catalyzes the condensation of the acetyl group of acetyl-CoA with 3-methyl-2-oxobutanoate (2-oxoisovalerate) to form 3-carboxy-3-hydroxy-4-methylpentanoate (2-isopropylmalate). This is Probable 2-isopropylmalate synthase (leuA) from Ignicoccus hospitalis (strain KIN4/I / DSM 18386 / JCM 14125).